We begin with the raw amino-acid sequence, 397 residues long: Lysosomal acid lipase/cholesteryl ester hydrolase (397 aa).

The signal sequence occupies residues 1–25 (MQLLGRVICFVVGILLSGGPTGTIS). A propeptide spans 26–72 (AVDPEANMNVTEIIMHWGYPEHSVQTGDGYILGVHRIPHGRKNQFDK) (removed in mature form). Residues Asn-34, Asn-99, and Asn-159 are each glycosylated (N-linked (GlcNAc...) asparagine). Residues 84–378 (HGFLADSSNW…EWDHLDFIWG (295 aa)) form the AB hydrolase-1 domain. Ser-172 (charge relay system) is an active-site residue. 2 N-linked (GlcNAc...) asparagine glycosylation sites follow: Asn-271 and Asn-319. His-372 acts as the Charge relay system in catalysis.

The protein belongs to the AB hydrolase superfamily. Lipase family. As to quaternary structure, monomer. Post-translationally, glycosylation is not essential for catalytic activity.

It localises to the lysosome. The catalysed reaction is a sterol ester + H2O = a sterol + a fatty acid + H(+). It carries out the reaction cholesteryl (9Z-octadecenoate) + H2O = cholesterol + (9Z)-octadecenoate + H(+). It catalyses the reaction a triacylglycerol + H2O = a 1,2-diacylglycerol + a fatty acid + H(+). The enzyme catalyses 1,2-di-(9Z-octadecenoyl)-glycerol + (9Z)-octadecenoate + H(+) = 1,2,3-tri-(9Z-octadecenoyl)-glycerol + H2O. The catalysed reaction is a 1,2-diacylglycerol + H2O = a 1-acylglycerol + a fatty acid + H(+). It carries out the reaction 1,2-di-(9Z-octadecenoyl)-glycerol + H2O = 1-(9Z-octadecenoyl)-glycerol + (9Z)-octadecenoate + H(+). It catalyses the reaction a 1,3-diacylglycerol + H2O = a 1-acylglycerol + a fatty acid + H(+). The enzyme catalyses 1,3-di-(9Z-octadecenoyl)-glycerol + H2O = 1-(9Z-octadecenoyl)-glycerol + (9Z)-octadecenoate + H(+). In terms of biological role, catalyzes the deacylation of cholesteryl ester core lipids of endocytosed low density lipoproteins to generate free fatty acids and cholesterol. Hydrolyzes triglycerides (1,2,3-triacylglycerol) and diglycerides (such as 1,2-diacylglycerol and 1,3-diacylglycerol) with preference for the acyl moieties at the sn-1 or sn-3 positions. This chain is Lysosomal acid lipase/cholesteryl ester hydrolase (Lipa), found in Rattus norvegicus (Rat).